A 225-amino-acid polypeptide reads, in one-letter code: Cytidylate kinase (225 aa).

12 to 20 (GPSGAGKGT) is a binding site for ATP.

It belongs to the cytidylate kinase family. Type 1 subfamily.

The protein resides in the cytoplasm. The catalysed reaction is CMP + ATP = CDP + ADP. It catalyses the reaction dCMP + ATP = dCDP + ADP. This chain is Cytidylate kinase, found in Stenotrophomonas maltophilia (strain R551-3).